A 186-amino-acid chain; its full sequence is Elongation factor P (186 aa).

This sequence belongs to the elongation factor P family.

The protein resides in the cytoplasm. It participates in protein biosynthesis; polypeptide chain elongation. Involved in peptide bond synthesis. Stimulates efficient translation and peptide-bond synthesis on native or reconstituted 70S ribosomes in vitro. Probably functions indirectly by altering the affinity of the ribosome for aminoacyl-tRNA, thus increasing their reactivity as acceptors for peptidyl transferase. In Streptococcus pneumoniae (strain Hungary19A-6), this protein is Elongation factor P.